Consider the following 261-residue polypeptide: Protein FAM216A (261 aa).

Positions 1–52 are disordered; sequence MPSRCPGVAGPPALARTEGSEGSAGQSYHQNSKGTGEQHKAERIKEGHRMSS. Polar residues predominate over residues 23–35; sequence SAGQSYHQNSKGT. A compositionally biased stretch (basic and acidic residues) spans 36-49; the sequence is GEQHKAERIKEGHR.

It belongs to the FAM216 family.

This chain is Protein FAM216A (Fam216a), found in Rattus norvegicus (Rat).